The sequence spans 269 residues: G-protein coupled receptor homolog C3 (269 aa).

A disulfide bridge links Cys-28 with Cys-107. Transmembrane regions (helical) follow at residues 30 to 50 (IMSVLYYVGFFSNMFIITLMS), 71 to 91 (IGILMCCSAWLLSLILSSPVS), 123 to 143 (LMQIEITILGFLIPIIIFVYC), 165 to 185 (IVLMIVVCSLICWIPLYIVLM), and 200 to 220 (HLCLYLNLAYAITFSETISLA).

It belongs to the G-protein coupled receptor 1 family.

Its subcellular location is the host cell membrane. The protein is G-protein coupled receptor homolog C3 of Sus scrofa (Pig).